Consider the following 493-residue polypeptide: Cysteine--tRNA ligase (493 aa).

Cys41 is a Zn(2+) binding site. Positions 43–53 match the 'HIGH' region motif; it reads PTVYNYPHIGN. Zn(2+) contacts are provided by Cys231, His256, and Glu260. The short motif at 296–300 is the 'KMSKS' region element; the sequence is KMSKS. Residue Lys299 participates in ATP binding.

It belongs to the class-I aminoacyl-tRNA synthetase family. As to quaternary structure, monomer. Zn(2+) is required as a cofactor.

The protein localises to the cytoplasm. The catalysed reaction is tRNA(Cys) + L-cysteine + ATP = L-cysteinyl-tRNA(Cys) + AMP + diphosphate. This chain is Cysteine--tRNA ligase, found in Novosphingobium aromaticivorans (strain ATCC 700278 / DSM 12444 / CCUG 56034 / CIP 105152 / NBRC 16084 / F199).